The sequence spans 310 residues: p-hydroxybenzoic acid efflux pump subunit AaeA (310 aa).

A helical transmembrane segment spans residues 12-32; it reads AITLVLVILAFIAIFRAWVYY.

Belongs to the membrane fusion protein (MFP) (TC 8.A.1) family.

It is found in the cell inner membrane. Its function is as follows. Forms an efflux pump with AaeB. The chain is p-hydroxybenzoic acid efflux pump subunit AaeA from Salmonella schwarzengrund (strain CVM19633).